A 126-amino-acid chain; its full sequence is UPF0538 protein C2orf76 homolog (126 aa).

The protein belongs to the UPF0538 family.

The sequence is that of UPF0538 protein C2orf76 homolog from Bos taurus (Bovine).